The following is a 498-amino-acid chain: POU domain protein 2, isoform A (498 aa).

The span at 1–30 (MMVLQQQQQQRLWDATTTSNTNTQTQQSAN) shows a compositional bias: low complexity. The segment at 1-35 (MMVLQQQQQQRLWDATTTSNTNTQTQQSANVESTP) is disordered. Ser72, Ser211, Ser215, Ser217, and Ser219 each carry phosphoserine. Positions 191-273 (QMKQQQREDP…STPKPTSGLT (83 aa)) are disordered. Residues 207 to 222 (PLAKSPLRSPSLSPVP) show a composition bias toward low complexity. Polar residues predominate over residues 228–251 (QQRTPPNSMTANSLGMSSAVMTPN). Residues 252–270 (TPSMQQQPQLQQSTPKPTS) show a composition bias toward low complexity. One can recognise a POU-specific domain in the interval 286 to 360 (EETTDLEELE…LLQKWLEDAD (75 aa)). The segment at residues 391 to 450 (RRKKRTSIETTVRTTLEKAFLMNCKPTSEEISQLSERLNMDKEVIRVWFCNRRQKEKRIN) is a DNA-binding region (homeobox).

It belongs to the POU transcription factor family. Class-2 subfamily. In terms of tissue distribution, initial expression in cellular blastoderm stage, then in ectodermal stripes during germband extension. Broad expression in the neuroectoderm followed by limitation to discrete subsets of CNS cells, and expression in specific PNS neurons and support cells.

The protein localises to the nucleus. In terms of biological role, DNA-binding regulatory protein implicated in early development. Involved in neuronal cell fate decision. May act as an octamer-dependent activator of transcription. Could also play an early role in specific ectodermal cells, and a subsequent role in the embryonic nervous system. This chain is POU domain protein 2, isoform A (pdm2), found in Drosophila melanogaster (Fruit fly).